We begin with the raw amino-acid sequence, 342 residues long: tRNA N6-adenosine threonylcarbamoyltransferase (342 aa).

Fe cation is bound by residues His-111 and His-115. Substrate is bound by residues 134 to 138, Asp-167, Gly-180, and Asn-275; that span reads LVSGG. Asp-303 lines the Fe cation pocket.

The protein belongs to the KAE1 / TsaD family. Fe(2+) is required as a cofactor.

It localises to the cytoplasm. It catalyses the reaction L-threonylcarbamoyladenylate + adenosine(37) in tRNA = N(6)-L-threonylcarbamoyladenosine(37) in tRNA + AMP + H(+). Functionally, required for the formation of a threonylcarbamoyl group on adenosine at position 37 (t(6)A37) in tRNAs that read codons beginning with adenine. Is involved in the transfer of the threonylcarbamoyl moiety of threonylcarbamoyl-AMP (TC-AMP) to the N6 group of A37, together with TsaE and TsaB. TsaD likely plays a direct catalytic role in this reaction. The sequence is that of tRNA N6-adenosine threonylcarbamoyltransferase from Paraburkholderia xenovorans (strain LB400).